The chain runs to 234 residues: Ribitol-5-phosphate cytidylyltransferase (234 aa).

CTP-binding positions include 7 to 10 and 79 to 85; these read LAGG and GSIVQKS.

The protein belongs to the IspD/TarI cytidylyltransferase family. TarI subfamily.

It catalyses the reaction D-ribitol 5-phosphate + CTP + H(+) = CDP-L-ribitol + diphosphate. The protein operates within cell wall biogenesis; poly(ribitol phosphate) teichoic acid biosynthesis. In terms of biological role, catalyzes the transfer of the cytidylyl group of CTP to D-ribitol 5-phosphate. In Lacticaseibacillus paracasei (strain ATCC 334 / BCRC 17002 / CCUG 31169 / CIP 107868 / KCTC 3260 / NRRL B-441) (Lactobacillus paracasei), this protein is Ribitol-5-phosphate cytidylyltransferase.